The chain runs to 228 residues: Ribose-5-phosphate isomerase A (228 aa).

Substrate is bound by residues 27–30 (TGTT), 86–89 (DGAD), and 100–103 (KGMG). Glu-109 functions as the Proton acceptor in the catalytic mechanism. Lys-127 provides a ligand contact to substrate.

The protein belongs to the ribose 5-phosphate isomerase family. As to quaternary structure, homodimer.

It carries out the reaction aldehydo-D-ribose 5-phosphate = D-ribulose 5-phosphate. The protein operates within carbohydrate degradation; pentose phosphate pathway; D-ribose 5-phosphate from D-ribulose 5-phosphate (non-oxidative stage): step 1/1. Its function is as follows. Catalyzes the reversible conversion of ribose-5-phosphate to ribulose 5-phosphate. The chain is Ribose-5-phosphate isomerase A from Borreliella afzelii (strain PKo) (Borrelia afzelii).